The chain runs to 346 residues: NADH-ubiquinone oxidoreductase chain 2 (346 aa).

The next 10 membrane-spanning stretches (helical) occupy residues 25 to 45 (NLLL…PLLA), 56 to 76 (ATKY…VIIL), 94 to 114 (LLNM…FHYW), 122 to 142 (IPLH…LSIL), 148 to 168 (LLNP…GAWG), 178 to 198 (IMAY…PYNP), 200 to 220 (LTLL…ITLM), 240 to 260 (ILTM…LTGF), 278 to 298 (LSTL…RLIY), and 325 to 345 (FILP…SQLI).

This sequence belongs to the complex I subunit 2 family. As to quaternary structure, core subunit of respiratory chain NADH dehydrogenase (Complex I) which is composed of 45 different subunits. Interacts with TMEM242.

It localises to the mitochondrion inner membrane. It catalyses the reaction a ubiquinone + NADH + 5 H(+)(in) = a ubiquinol + NAD(+) + 4 H(+)(out). Core subunit of the mitochondrial membrane respiratory chain NADH dehydrogenase (Complex I) which catalyzes electron transfer from NADH through the respiratory chain, using ubiquinone as an electron acceptor. Essential for the catalytic activity and assembly of complex I. The polypeptide is NADH-ubiquinone oxidoreductase chain 2 (Rattus norvegicus (Rat)).